We begin with the raw amino-acid sequence, 453 residues long: UDP-N-acetylmuramate--L-alanyl-gamma-D-glutamyl-meso-2,6-diaminoheptandioate ligase (453 aa).

111 to 117 provides a ligand contact to ATP; the sequence is GTHGKTT.

The protein belongs to the MurCDEF family. Mpl subfamily. Mg(2+) is required as a cofactor.

The enzyme catalyses UDP-N-acetyl-alpha-D-muramate + L-alanyl-gamma-D-glutamyl-meso-2,6-diaminopimelate + ATP = UDP-N-acetyl-alpha-D-muramoyl-L-alanyl-gamma-D-glutamyl-meso-2,6-diaminopimelate + ADP + phosphate + H(+). Its pathway is cell wall biogenesis; peptidoglycan recycling. Its function is as follows. Reutilizes the intact tripeptide L-alanyl-gamma-D-glutamyl-meso-diaminopimelate by linking it to UDP-N-acetylmuramate. The sequence is that of UDP-N-acetylmuramate--L-alanyl-gamma-D-glutamyl-meso-2,6-diaminoheptandioate ligase from Haemophilus influenzae (strain ATCC 51907 / DSM 11121 / KW20 / Rd).